Here is a 348-residue protein sequence, read N- to C-terminus: GTPase Obg (348 aa).

The region spanning 1 to 159 (MKFVDEVKVH…RELVLELKLM (159 aa)) is the Obg domain. Residues 160 to 331 (ADVGLVGLPN…LLSALVRILS (172 aa)) form the OBG-type G domain. GTP contacts are provided by residues 166–173 (GLPNAGKS), 191–195 (FTTLI), 213–216 (DIPG), 283–286 (NKVD), and 312–314 (SAR). Residues serine 173 and threonine 193 each contribute to the Mg(2+) site.

This sequence belongs to the TRAFAC class OBG-HflX-like GTPase superfamily. OBG GTPase family. In terms of assembly, monomer. The cofactor is Mg(2+).

The protein localises to the cytoplasm. In terms of biological role, an essential GTPase which binds GTP, GDP and possibly (p)ppGpp with moderate affinity, with high nucleotide exchange rates and a fairly low GTP hydrolysis rate. Plays a role in control of the cell cycle, stress response, ribosome biogenesis and in those bacteria that undergo differentiation, in morphogenesis control. The polypeptide is GTPase Obg (Syntrophobacter fumaroxidans (strain DSM 10017 / MPOB)).